A 1481-amino-acid chain; its full sequence is Protein shortage in chiasmata 1 ortholog (1481 aa).

2 disordered regions span residues Thr479–Val498 and Lys512–Ser560. Positions Ser513–Gln531 are enriched in basic and acidic residues. Positions Ser543–Ser560 are enriched in low complexity.

Belongs to the XPF family. Highly divergent. In terms of assembly, interacts with TEX11. Interacts with SPO16. Mainly expressed in adult testis.

It is found in the chromosome. Functionally, ATPase required during meiosis for the formation of crossover recombination intermediates. Binds DNA: preferentially binds to single-stranded DNA and DNA branched structures. Does not show nuclease activity in vitro, but shows ATPase activity, which is stimulated by the presence of single-stranded DNA. Plays a key role in homologous recombination and crossing-over in meiotic prophase I in male and female germ cells. Required for proper synaptonemal complex assembly and homologous chromosome pairing. Required for recruitment of TEX11 and MSH4 to recombination intermediates. The chain is Protein shortage in chiasmata 1 ortholog from Mus musculus (Mouse).